The following is a 322-amino-acid chain: 4-hydroxy-3-methylbut-2-enyl diphosphate reductase (322 aa).

Cys15 contributes to the [4Fe-4S] cluster binding site. (2E)-4-hydroxy-3-methylbut-2-enyl diphosphate-binding residues include His44 and His77. Dimethylallyl diphosphate is bound by residues His44 and His77. Isopentenyl diphosphate is bound by residues His44 and His77. Cys99 is a binding site for [4Fe-4S] cluster. His127 is a binding site for (2E)-4-hydroxy-3-methylbut-2-enyl diphosphate. His127 contacts dimethylallyl diphosphate. His127 provides a ligand contact to isopentenyl diphosphate. The Proton donor role is filled by Glu129. Thr168 provides a ligand contact to (2E)-4-hydroxy-3-methylbut-2-enyl diphosphate. Position 198 (Cys198) interacts with [4Fe-4S] cluster. Residues Ser226, Ser227, Asn228, and Ser270 each contribute to the (2E)-4-hydroxy-3-methylbut-2-enyl diphosphate site. Dimethylallyl diphosphate-binding residues include Ser226, Ser227, Asn228, and Ser270. Isopentenyl diphosphate-binding residues include Ser226, Ser227, Asn228, and Ser270.

Belongs to the IspH family. It depends on [4Fe-4S] cluster as a cofactor.

It catalyses the reaction isopentenyl diphosphate + 2 oxidized [2Fe-2S]-[ferredoxin] + H2O = (2E)-4-hydroxy-3-methylbut-2-enyl diphosphate + 2 reduced [2Fe-2S]-[ferredoxin] + 2 H(+). The catalysed reaction is dimethylallyl diphosphate + 2 oxidized [2Fe-2S]-[ferredoxin] + H2O = (2E)-4-hydroxy-3-methylbut-2-enyl diphosphate + 2 reduced [2Fe-2S]-[ferredoxin] + 2 H(+). It participates in isoprenoid biosynthesis; dimethylallyl diphosphate biosynthesis; dimethylallyl diphosphate from (2E)-4-hydroxy-3-methylbutenyl diphosphate: step 1/1. It functions in the pathway isoprenoid biosynthesis; isopentenyl diphosphate biosynthesis via DXP pathway; isopentenyl diphosphate from 1-deoxy-D-xylulose 5-phosphate: step 6/6. Catalyzes the conversion of 1-hydroxy-2-methyl-2-(E)-butenyl 4-diphosphate (HMBPP) into a mixture of isopentenyl diphosphate (IPP) and dimethylallyl diphosphate (DMAPP). Acts in the terminal step of the DOXP/MEP pathway for isoprenoid precursor biosynthesis. The sequence is that of 4-hydroxy-3-methylbut-2-enyl diphosphate reductase from Neisseria gonorrhoeae (strain ATCC 700825 / FA 1090).